The sequence spans 411 residues: Multifunctional CCA protein (411 aa).

ATP contacts are provided by Gly-8 and Arg-11. 2 residues coordinate CTP: Gly-8 and Arg-11. Mg(2+)-binding residues include Glu-21 and Asp-23. Positions 91, 137, and 140 each coordinate ATP. The CTP site is built by Arg-91, Arg-137, and Arg-140. Positions 228–329 (TGVHALLALE…LKTLLALDGL (102 aa)) constitute an HD domain.

It belongs to the tRNA nucleotidyltransferase/poly(A) polymerase family. Bacterial CCA-adding enzyme type 1 subfamily. Monomer. Can also form homodimers and oligomers. It depends on Mg(2+) as a cofactor. Ni(2+) serves as cofactor.

The enzyme catalyses a tRNA precursor + 2 CTP + ATP = a tRNA with a 3' CCA end + 3 diphosphate. The catalysed reaction is a tRNA with a 3' CCA end + 2 CTP + ATP = a tRNA with a 3' CCACCA end + 3 diphosphate. Its function is as follows. Catalyzes the addition and repair of the essential 3'-terminal CCA sequence in tRNAs without using a nucleic acid template. Adds these three nucleotides in the order of C, C, and A to the tRNA nucleotide-73, using CTP and ATP as substrates and producing inorganic pyrophosphate. tRNA 3'-terminal CCA addition is required both for tRNA processing and repair. Also involved in tRNA surveillance by mediating tandem CCA addition to generate a CCACCA at the 3' terminus of unstable tRNAs. While stable tRNAs receive only 3'-terminal CCA, unstable tRNAs are marked with CCACCA and rapidly degraded. The protein is Multifunctional CCA protein of Teredinibacter turnerae (strain ATCC 39867 / T7901).